A 190-amino-acid polypeptide reads, in one-letter code: Probable nicotinate-nucleotide adenylyltransferase (190 aa).

Belongs to the NadD family.

The catalysed reaction is nicotinate beta-D-ribonucleotide + ATP + H(+) = deamido-NAD(+) + diphosphate. The protein operates within cofactor biosynthesis; NAD(+) biosynthesis; deamido-NAD(+) from nicotinate D-ribonucleotide: step 1/1. In terms of biological role, catalyzes the reversible adenylation of nicotinate mononucleotide (NaMN) to nicotinic acid adenine dinucleotide (NaAD). In Frankia casuarinae (strain DSM 45818 / CECT 9043 / HFP020203 / CcI3), this protein is Probable nicotinate-nucleotide adenylyltransferase.